A 206-amino-acid polypeptide reads, in one-letter code: LexA repressor (206 aa).

Residues Val28–Ser48 constitute a DNA-binding region (H-T-H motif). Catalysis depends on for autocatalytic cleavage activity residues Ser128 and Lys166.

The protein belongs to the peptidase S24 family. As to quaternary structure, homodimer.

The catalysed reaction is Hydrolysis of Ala-|-Gly bond in repressor LexA.. Represses a number of genes involved in the response to DNA damage (SOS response), including recA and lexA. In the presence of single-stranded DNA, RecA interacts with LexA causing an autocatalytic cleavage which disrupts the DNA-binding part of LexA, leading to derepression of the SOS regulon and eventually DNA repair. The polypeptide is LexA repressor (Bacillus thuringiensis (strain Al Hakam)).